The chain runs to 409 residues: Glutamyl-tRNA(Gln) amidotransferase subunit D (409 aa).

Residues 68–390 form the Asparaginase/glutaminase domain; it reads RKISVLATGG…DLFRDLFRKN (323 aa). Residues Thr78, Thr152, Asp153, and Lys230 contribute to the active site.

The protein belongs to the asparaginase 1 family. GatD subfamily. Heterodimer of GatD and GatE.

It catalyses the reaction L-glutamyl-tRNA(Gln) + L-glutamine + ATP + H2O = L-glutaminyl-tRNA(Gln) + L-glutamate + ADP + phosphate + H(+). Its function is as follows. Allows the formation of correctly charged Gln-tRNA(Gln) through the transamidation of misacylated Glu-tRNA(Gln) in organisms which lack glutaminyl-tRNA synthetase. The reaction takes place in the presence of glutamine and ATP through an activated gamma-phospho-Glu-tRNA(Gln). The GatDE system is specific for glutamate and does not act on aspartate. This is Glutamyl-tRNA(Gln) amidotransferase subunit D from Thermoplasma acidophilum (strain ATCC 25905 / DSM 1728 / JCM 9062 / NBRC 15155 / AMRC-C165).